We begin with the raw amino-acid sequence, 349 residues long: 4-hydroxythreonine-4-phosphate dehydrogenase (349 aa).

Substrate contacts are provided by histidine 141 and threonine 142. Histidine 176, histidine 221, and histidine 276 together coordinate a divalent metal cation. Substrate is bound by residues lysine 284, asparagine 293, and arginine 302.

This sequence belongs to the PdxA family. Homodimer. It depends on Zn(2+) as a cofactor. Mg(2+) serves as cofactor. Co(2+) is required as a cofactor.

The protein resides in the cytoplasm. It carries out the reaction 4-(phosphooxy)-L-threonine + NAD(+) = 3-amino-2-oxopropyl phosphate + CO2 + NADH. Its pathway is cofactor biosynthesis; pyridoxine 5'-phosphate biosynthesis; pyridoxine 5'-phosphate from D-erythrose 4-phosphate: step 4/5. Catalyzes the NAD(P)-dependent oxidation of 4-(phosphooxy)-L-threonine (HTP) into 2-amino-3-oxo-4-(phosphooxy)butyric acid which spontaneously decarboxylates to form 3-amino-2-oxopropyl phosphate (AHAP). The chain is 4-hydroxythreonine-4-phosphate dehydrogenase from Methylorubrum populi (strain ATCC BAA-705 / NCIMB 13946 / BJ001) (Methylobacterium populi).